The primary structure comprises 261 residues: Adenosylcobinamide-GDP ribazoletransferase (261 aa).

7 consecutive transmembrane segments (helical) span residues G4–W26, L40–L60, P62–L82, V110–M130, F140–I160, C197–F217, and I237–L257.

The protein belongs to the CobS family. Mg(2+) is required as a cofactor.

It is found in the cell membrane. It catalyses the reaction alpha-ribazole + adenosylcob(III)inamide-GDP = adenosylcob(III)alamin + GMP + H(+). It carries out the reaction alpha-ribazole 5'-phosphate + adenosylcob(III)inamide-GDP = adenosylcob(III)alamin 5'-phosphate + GMP + H(+). The protein operates within cofactor biosynthesis; adenosylcobalamin biosynthesis; adenosylcobalamin from cob(II)yrinate a,c-diamide: step 7/7. Its function is as follows. Joins adenosylcobinamide-GDP and alpha-ribazole to generate adenosylcobalamin (Ado-cobalamin). Also synthesizes adenosylcobalamin 5'-phosphate from adenosylcobinamide-GDP and alpha-ribazole 5'-phosphate. The polypeptide is Adenosylcobinamide-GDP ribazoletransferase (Halalkalibacterium halodurans (strain ATCC BAA-125 / DSM 18197 / FERM 7344 / JCM 9153 / C-125) (Bacillus halodurans)).